The chain runs to 558 residues: Ankyrin repeat protein OPG189 (558 aa).

7 ANK repeats span residues 65 to 95, 169 to 205, 209 to 239, 243 to 272, 276 to 304, 339 to 368, and 372 to 401; these read YGENILHIYSMDDANTNIIIFFLDRVLNINK, YGCTLLHRCIYHYKKSESESYNELIKILLNNGSDVDK, YGNTPFILLCKHDINNVELFEICLENANIDS, NRYTPLHYVSCRNKYDFVKLLISKGANVNA, FGTTPFYCGIIHGISLIKLYLESDTELEI, YNETSIYDAVSYNAYNTLVYLLNRNGDFET, and SGCTCISEAVANNNKIIMEVLLSKRPSLKI.

The protein belongs to the orthopoxvirus OPG189 protein family.

Contributes to viral release without involving rearrangement of host actin. This is Ankyrin repeat protein OPG189 (OPG189) from Vaccinia virus (strain Western Reserve) (VACV).